The chain runs to 217 residues: Growth hormone variant (217 aa).

The first 26 residues, 1 to 26 (MAAGSWTCLILAIALLCLPWLQEGSA), serve as a signal peptide directing secretion. Cystine bridges form between Cys79–Cys191 and Cys208–Cys215. Residues Ser132 and Ser176 each carry the phosphoserine modification.

The protein belongs to the somatotropin/prolactin family. In terms of tissue distribution, expressed in the placenta.

It localises to the secreted. In terms of biological role, plays an important role in growth control. Its major role in stimulating body growth is to stimulate the liver and other tissues to secrete IGF1. It stimulates both the differentiation and proliferation of myoblasts. It also stimulates amino acid uptake and protein synthesis in muscle and other tissues. In Macaca mulatta (Rhesus macaque), this protein is Growth hormone variant (GH2).